The chain runs to 1836 residues: Druantia protein DruE (1836 aa).

In terms of domain architecture, Helicase ATP-binding spans 108–405 (SFLGEDASDL…FAQDLTGLSP (298 aa)). 121–128 (TGTGSGKT) contacts ATP. The short motif at 347-350 (DEAH) is the DEAH box element. The Helicase C-terminal domain maps to 1014–1199 (DCTALMPFAL…EVKVNNPKIA (186 aa)).

The protein resides in the cytoplasm. Component of antiviral defense system Druantia type I, composed of DruA, DruB, DruC, DruD and DruE. Expression of Druantia in E.coli (strain MG1655) confers resistance to phage lambda, SECphi18, SECphi27 and T4. This protein is probably a helicase. In Escherichia coli (strain UMEA 4076-1), this protein is Druantia protein DruE.